The chain runs to 441 residues: Velvet complex subunit B (441 aa).

Polar residues-rich tracts occupy residues 1–14 (MNPG…QPGH) and 60–75 (MMQQ…STTE). The tract at residues 1–104 (MNPGYSSTAS…QPHVGEQDGR (104 aa)) is disordered. Residues 100 to 426 (EQDGRKYRLD…AGQGIKIPIR (327 aa)) form the Velvet domain.

This sequence belongs to the velvet family. VelB subfamily. Component of the heterotrimeric velvet complex composed of LAEA, VEA and VELB; VEA acting as a bridging protein between LAEA and VELB. Forms a heterodimeric complex with VOSA; the formation of the VELB-VOSA complex is light-dependent.

It localises to the nucleus. The protein resides in the cytoplasm. Functionally, component of the velvet transcription factor complex that controls sexual/asexual developmental ratio in response to light, promoting sexual development in the darkness while stimulating asexual sporulation under illumination. The velvet complex acts as a global regulator for secondary metabolite gene expression. Component of the VELB-VOSA heterodimeric complex that plays a dual role in activating genes associated with spore maturation and repressing certain development-associated genes. The VELB-VOSA complex binds DNA through the DNA-binding domain of VOSA that recognizes an 11-nucleotide consensus sequence 5'-CTGGCCGCGGC-3' consisting of two motifs in the promoters of key developmental regulatory genes. Involved in the regulation of the response to eactive oxygen species (ROS) stress. This chain is Velvet complex subunit B, found in Pyricularia oryzae (strain 70-15 / ATCC MYA-4617 / FGSC 8958) (Rice blast fungus).